A 403-amino-acid chain; its full sequence is GTPase Obg (403 aa).

The region spanning 1 to 159 is the Obg domain; sequence MKFIDESLIR…RDLLLELMLL (159 aa). The OBG-type G domain maps to 160-333; it reads ADVGMLGFPN…LCRDIMDFII (174 aa). GTP is bound by residues 166-173, 191-195, 213-216, 283-286, and 314-316; these read GFPNAGKS, FTTLV, DIPG, NKID, and SAA. Serine 173 and threonine 193 together coordinate Mg(2+). Residues 364–403 form a disordered region; the sequence is YQFDDDEDWDDDWTEEDDDEDWDDDWSEEDDEGIEFIYKP. The segment covering 365–397 has biased composition (acidic residues); sequence QFDDDEDWDDDWTEEDDDEDWDDDWSEEDDEGI.

This sequence belongs to the TRAFAC class OBG-HflX-like GTPase superfamily. OBG GTPase family. As to quaternary structure, monomer. The cofactor is Mg(2+).

The protein localises to the cytoplasm. Functionally, an essential GTPase which binds GTP, GDP and possibly (p)ppGpp with moderate affinity, with high nucleotide exchange rates and a fairly low GTP hydrolysis rate. Plays a role in control of the cell cycle, stress response, ribosome biogenesis and in those bacteria that undergo differentiation, in morphogenesis control. The protein is GTPase Obg of Haemophilus influenzae (strain PittGG).